We begin with the raw amino-acid sequence, 146 residues long: 3-dehydroquinate dehydratase (146 aa).

Tyrosine 24 serves as the catalytic Proton acceptor. Residues asparagine 73, histidine 79, and aspartate 86 each contribute to the substrate site. The active-site Proton donor is the histidine 99. Substrate is bound by residues 100–101 (LS) and arginine 110.

It belongs to the type-II 3-dehydroquinase family. As to quaternary structure, homododecamer.

The enzyme catalyses 3-dehydroquinate = 3-dehydroshikimate + H2O. It functions in the pathway metabolic intermediate biosynthesis; chorismate biosynthesis; chorismate from D-erythrose 4-phosphate and phosphoenolpyruvate: step 3/7. Functionally, catalyzes a trans-dehydration via an enolate intermediate. The protein is 3-dehydroquinate dehydratase of Shewanella baltica (strain OS195).